Reading from the N-terminus, the 326-residue chain is DNA-directed RNA polymerase subunit alpha (326 aa).

The tract at residues 1-231 (MQSNALLKPR…DQLSVFADLE (231 aa)) is alpha N-terminal domain (alpha-NTD). Residues 245–326 (IDPVLLRPVD…WPPAGLEKLG (82 aa)) are alpha C-terminal domain (alpha-CTD).

This sequence belongs to the RNA polymerase alpha chain family. In terms of assembly, homodimer. The RNAP catalytic core consists of 2 alpha, 1 beta, 1 beta' and 1 omega subunit. When a sigma factor is associated with the core the holoenzyme is formed, which can initiate transcription.

It catalyses the reaction RNA(n) + a ribonucleoside 5'-triphosphate = RNA(n+1) + diphosphate. Functionally, DNA-dependent RNA polymerase catalyzes the transcription of DNA into RNA using the four ribonucleoside triphosphates as substrates. This Azoarcus sp. (strain BH72) protein is DNA-directed RNA polymerase subunit alpha.